The primary structure comprises 60 residues: Cytotoxin 7 (60 aa).

4 disulfides stabilise this stretch: C3/C21, C14/C38, C42/C53, and C54/C59.

This sequence belongs to the three-finger toxin family. Short-chain subfamily. Type IA cytotoxin sub-subfamily. As to quaternary structure, monomer in solution; Homodimer and oligomer in the presence of negatively charged lipids forming a pore with a size ranging between 20 and 30 Angstroms. In terms of tissue distribution, expressed by the venom gland.

The protein resides in the secreted. It is found in the target cell membrane. In terms of biological role, shows cytolytic activity on many different cells by forming pore in lipid membranes. In vivo, increases heart rate or kills the animal by cardiac arrest. In addition, it binds to heparin with high affinity, interacts with Kv channel-interacting protein 1 (KCNIP1) in a calcium-independent manner, and binds to integrin alpha-V/beta-3 (ITGAV/ITGB3) with moderate affinity. This Naja annulifera (Banded Egyptian cobra) protein is Cytotoxin 7.